The sequence spans 129 residues: Ribosome-binding factor A (129 aa).

The protein belongs to the RbfA family. As to quaternary structure, monomer. Binds 30S ribosomal subunits, but not 50S ribosomal subunits or 70S ribosomes.

It localises to the cytoplasm. One of several proteins that assist in the late maturation steps of the functional core of the 30S ribosomal subunit. Associates with free 30S ribosomal subunits (but not with 30S subunits that are part of 70S ribosomes or polysomes). Required for efficient processing of 16S rRNA. May interact with the 5'-terminal helix region of 16S rRNA. The polypeptide is Ribosome-binding factor A (Desulfosudis oleivorans (strain DSM 6200 / JCM 39069 / Hxd3) (Desulfococcus oleovorans)).